The sequence spans 439 residues: UDP-N-acetylmuramoylalanine--D-glutamate ligase (439 aa).

112-118 (GSNGKST) provides a ligand contact to ATP.

This sequence belongs to the MurCDEF family.

It localises to the cytoplasm. The catalysed reaction is UDP-N-acetyl-alpha-D-muramoyl-L-alanine + D-glutamate + ATP = UDP-N-acetyl-alpha-D-muramoyl-L-alanyl-D-glutamate + ADP + phosphate + H(+). The protein operates within cell wall biogenesis; peptidoglycan biosynthesis. Functionally, cell wall formation. Catalyzes the addition of glutamate to the nucleotide precursor UDP-N-acetylmuramoyl-L-alanine (UMA). The protein is UDP-N-acetylmuramoylalanine--D-glutamate ligase of Mannheimia succiniciproducens (strain KCTC 0769BP / MBEL55E).